The sequence spans 438 residues: Dolichyl-diphosphooligosaccharide--protein glycosyltransferase 48 kDa subunit (438 aa).

The N-terminal stretch at 1-25 is a signal peptide; it reads MASLRLSVLLVSVSWLLLLVSGLRA. Residues 26-408 lie on the Lumenal side of the membrane; that stretch reads GPRTLVLMEN…QYERFIPSAY (383 aa). The helical transmembrane segment at 409–429 threads the bilayer; the sequence is PYYASAFSVMFGLFIFSIVFL. The Cytoplasmic portion of the chain corresponds to 430-438; sequence HMKEKEKSD.

It belongs to the DDOST 48 kDa subunit family. In terms of assembly, component of the oligosaccharyltransferase (OST) complex.

It localises to the endoplasmic reticulum membrane. The protein operates within protein modification; protein glycosylation. Functionally, subunit of the oligosaccharyl transferase (OST) complex that catalyzes the initial transfer of a defined glycan (Glc(3)Man(9)GlcNAc(2) in eukaryotes) from the lipid carrier dolichol-pyrophosphate to an asparagine residue within an Asn-X-Ser/Thr consensus motif in nascent polypeptide chains, the first step in protein N-glycosylation. N-glycosylation occurs cotranslationally and the complex associates with the Sec61 complex at the channel-forming translocon complex that mediates protein translocation across the endoplasmic reticulum (ER). All subunits are required for a maximal enzyme activity. Required for the assembly of both SST3A- and SS3B-containing OST complexes. In Xenopus laevis (African clawed frog), this protein is Dolichyl-diphosphooligosaccharide--protein glycosyltransferase 48 kDa subunit.